Here is a 918-residue protein sequence, read N- to C-terminus: Cell cycle and apoptosis regulator protein 2 (918 aa).

The disordered stretch occupies residues 1 to 35; sequence MSQFKRQRINPLPGGRNFSGTASTSLLGPPPGLLT. Thr35 is subject to Phosphothreonine. At Lys112 the chain carries N6-acetyllysine; by KAT8. Lys123 carries the post-translational modification N6-methyllysine. A Phosphoserine modification is found at Ser124. Disordered stretches follow at residues 179–219, 446–510, and 568–637; these read NRFP…KPRH, KAAE…PAVI, and VSPP…ASED. Position 180 is an omega-N-methylarginine (Arg180). The residue at position 215 (Lys215) is an N6-acetyllysine; by KAT8. Composition is skewed to low complexity over residues 447–468 and 482–492; these read AAEA…EQAP and AETPEATTQQE. Thr454 carries the post-translational modification Phosphothreonine; by ATM, ATR and CK2. Thr484 is modified (phosphothreonine). A Phosphoserine modification is found at Ser569. Over residues 572 to 597 the composition is skewed to basic and acidic residues; it reads EPEKEEAAKEEEAIKEEVVKEPKDEA. Lys586 is covalently cross-linked (Glycyl lysine isopeptide (Lys-Gly) (interchain with G-Cter in SUMO2 and SUMO3); alternate). Residue Lys586 forms a Glycyl lysine isopeptide (Lys-Gly) (interchain with G-Cter in SUMO2); alternate linkage. Residues 605-665 form an interaction with MCC region; it reads ESEAPLKEDG…EEFAGAKLED (61 aa). 6 positions are modified to phosphoserine: Ser622, Ser670, Ser673, Ser676, Ser682, and Ser803. The interval 699-918 is interaction with NR1D1; that stretch reads DCLLAFVFFD…VEKEEPAPSN (220 aa). The stretch at 824-904 forms a coiled coil; it reads LENRIHTLEL…QLEIQRVVEK (81 aa). Thr892 carries the phosphothreonine modification.

As to quaternary structure, component of the DBIRD complex. Interacts with ZNF326/ZIRD; the interaction is direct. Interacts (via N-terminus) with SIRT1, which inhibits the deacetylation of substrates. Interacts (via N-terminus) with SUV39H1; this interaction abolishes the interaction with SIRT1. Component of a nuclear receptor-mediated transcription complex composed of at least ZNF335, CCAR2 and EMSY; the complex stimulates the transcription of nuclear receptor target genes such as SOX9 and HOXA1. Within the complex interacts with EMSY and interacts with ZNF335 (via C-terminus). Components of this complex may associate with components of a histone methylation complex to form a complex at least composed of ZNF335, HCFC1, CCAR2, EMSY, MKI67, RBBP5, ASH2L and WDR5. Within this complex, interacts with ASH2L. Interacts with NR1D1. Interacts (via N-terminus) with ESR1 and ESR2. Interacts (via N-terminus) with HDAC3 (via C-terminus). Interacts with HDAC1 and MED2F. Interacts with MCC. Interacts (via N-terminus) with NR1H2 and NR1H3 in a ligand-independent manner. Interacts with CSNK2A1. Interacts (via N-terminus) with p53/TP53. Interacts (via N-terminus) with BRCA1 (via the BRCT domains). Interacts (via N-terminus) with CHEK2 (via protein kinase domain). Interacts with PSEM3. Interacts (via N-terminus) with PSIA3 and SENP1. The sumoylated form shows a preferential interaction with SIRT1 as compared to its unmodified form. Interacts with CECR2; may form part of the CERF-1 and/or CEF-5 ISWI chromatin remodeling complexes in embryonic stem cells. ATM/ATR-mediated phosphorylation at Thr-454 upon DNA damage promotes binding to SIRT1. Phosphorylation at Thr-454 promotes its sumoylation by switching the binding partner of CCAR2 from SENP1 to PIAS3. In terms of processing, acetylation at Lys-112 and Lys-215 by KAT8 prevents inhibitory binding to SIRT1 and increases its deacetylase activity. Post-translationally, genotoxic stress induces its sumoylation and sumoylation promotes the SIRT1-CCAR2 interaction which in turn inhibits SIRT1-mediated deacetylation of p53/TP53. Sumoylation leads to transcriptional activation of p53/TP53 by sequestering SIRT1 from p53/TP53. Desumoylated by SENP1.

The protein resides in the nucleus. The protein localises to the cytoplasm. Its subcellular location is the cytoskeleton. It localises to the spindle. In terms of biological role, core component of the DBIRD complex, a multiprotein complex that acts at the interface between core mRNP particles and RNA polymerase II (RNAPII) and integrates transcript elongation with the regulation of alternative splicing: the DBIRD complex affects local transcript elongation rates and alternative splicing of a large set of exons embedded in (A + T)-rich DNA regions. Inhibits SIRT1 deacetylase activity leading to increasing levels of p53/TP53 acetylation and p53-mediated apoptosis. Inhibits SUV39H1 methyltransferase activity. Mediates ligand-dependent transcriptional activation by nuclear hormone receptors. Plays a critical role in maintaining genomic stability and cellular integrity following UV-induced genotoxic stress. Regulates the circadian expression of the core clock components NR1D1 and BMAL1. Enhances the transcriptional repressor activity of NR1D1 through stabilization of NR1D1 protein levels by preventing its ubiquitination and subsequent degradation. Represses the ligand-dependent transcriptional activation function of ESR2. Acts as a regulator of PCK1 expression and gluconeogenesis by a mechanism that involves, at least in part, both NR1D1 and SIRT1. Negatively regulates the deacetylase activity of HDAC3 and can alter its subcellular localization. Positively regulates the beta-catenin pathway (canonical Wnt signaling pathway) and is required for MCC-mediated repression of the beta-catenin pathway. Represses ligand-dependent transcriptional activation function of NR1H2 and NR1H3 and inhibits the interaction of SIRT1 with NR1H3. Plays an important role in tumor suppression through p53/TP53 regulation; stabilizes p53/TP53 by affecting its interaction with ubiquitin ligase MDM2. Represses the transcriptional activator activity of BRCA1. Inhibits SIRT1 in a CHEK2 and PSEM3-dependent manner and inhibits the activity of CHEK2 in vitro. The polypeptide is Cell cycle and apoptosis regulator protein 2 (CCAR2) (Pongo abelii (Sumatran orangutan)).